Consider the following 253-residue polypeptide: Amino-acid-binding protein AabA (253 aa).

Residues 1 to 23 (MPFLKTLFRGALCSIACGASLFC) form the signal peptide.

This sequence belongs to the bacterial solute-binding protein 3 family.

The protein resides in the periplasm. In Dichelobacter nodosus (Bacteroides nodosus), this protein is Amino-acid-binding protein AabA (aabA).